A 284-amino-acid polypeptide reads, in one-letter code: Putative ABC transporter ATP-binding protein PH1815 (284 aa).

The ABC transporter domain occupies 4–244; it reads IEVEDVSFRY…VEFLRTIGVK (241 aa). 38 to 45 is a binding site for ATP; sequence GPSGSGKS.

It belongs to the ABC transporter superfamily.

It is found in the cell membrane. Its function is as follows. Probably part of an ABC transporter complex. Responsible for energy coupling to the transport system. This chain is Putative ABC transporter ATP-binding protein PH1815, found in Pyrococcus horikoshii (strain ATCC 700860 / DSM 12428 / JCM 9974 / NBRC 100139 / OT-3).